Here is a 160-residue protein sequence, read N- to C-terminus: NADH-quinone oxidoreductase subunit B (160 aa).

[4Fe-4S] cluster contacts are provided by cysteine 37, cysteine 38, cysteine 102, and cysteine 132.

This sequence belongs to the complex I 20 kDa subunit family. As to quaternary structure, NDH-1 is composed of 14 different subunits. Subunits NuoB, C, D, E, F, and G constitute the peripheral sector of the complex. The cofactor is [4Fe-4S] cluster.

The protein localises to the cell inner membrane. The enzyme catalyses a quinone + NADH + 5 H(+)(in) = a quinol + NAD(+) + 4 H(+)(out). Its function is as follows. NDH-1 shuttles electrons from NADH, via FMN and iron-sulfur (Fe-S) centers, to quinones in the respiratory chain. Couples the redox reaction to proton translocation (for every two electrons transferred, four hydrogen ions are translocated across the cytoplasmic membrane), and thus conserves the redox energy in a proton gradient. The sequence is that of NADH-quinone oxidoreductase subunit B from Neisseria gonorrhoeae (strain ATCC 700825 / FA 1090).